We begin with the raw amino-acid sequence, 198 residues long: Ribonuclease HII (198 aa).

Residues 3-194 (RRVCGVDEAG…VKRCLALGQQ (192 aa)) form the RNase H type-2 domain. A divalent metal cation-binding residues include Asp9, Glu10, and Asp101.

This sequence belongs to the RNase HII family. Mn(2+) serves as cofactor. Mg(2+) is required as a cofactor.

It localises to the cytoplasm. The catalysed reaction is Endonucleolytic cleavage to 5'-phosphomonoester.. Endonuclease that specifically degrades the RNA of RNA-DNA hybrids. The polypeptide is Ribonuclease HII (Laribacter hongkongensis (strain HLHK9)).